The primary structure comprises 239 residues: MTNPVIIALDFPNWQKTDQFLQQFPKDEALFVKIGMELFYQEGPQLIKTLKARDYRIFLDLKLYDIPNTVQSAMTVIGQLGVDYTTIHAAGGQTMLQAGAAGLKAGAKQANVKPAKLLAITQLTSTNEAQMQQEQLVSVSLPESVAHYAQLAQQSDCDGVICSAQEITTIKSKTATDFLCVTPGIRPATSQNNDQKRAVTPLEAAQMHSNGIVVGRPITQASDPYQAYQAIKSEWESFK.

Residues D10, K33, D60 to T69, T124, R186, Q195, G215, and R216 contribute to the substrate site. K62 functions as the Proton donor in the catalytic mechanism.

The protein belongs to the OMP decarboxylase family. Type 1 subfamily. As to quaternary structure, homodimer.

The enzyme catalyses orotidine 5'-phosphate + H(+) = UMP + CO2. Its pathway is pyrimidine metabolism; UMP biosynthesis via de novo pathway; UMP from orotate: step 2/2. In terms of biological role, catalyzes the decarboxylation of orotidine 5'-monophosphate (OMP) to uridine 5'-monophosphate (UMP). This Latilactobacillus sakei subsp. sakei (strain 23K) (Lactobacillus sakei subsp. sakei) protein is Orotidine 5'-phosphate decarboxylase.